We begin with the raw amino-acid sequence, 141 residues long: Hemoglobin subunit alpha (141 aa).

A Globin domain is found at 1 to 141 (VLSAADKGNV…VSTVLTSKYR (141 aa)). Position 3 is a phosphoserine (serine 3). An N6-succinyllysine mark is found at lysine 7 and lysine 11. Lysine 16 is modified (N6-acetyllysine; alternate). N6-succinyllysine; alternate is present on lysine 16. Tyrosine 24 carries the post-translational modification Phosphotyrosine. A Phosphoserine modification is found at serine 35. Lysine 40 bears the N6-succinyllysine mark. Histidine 58 serves as a coordination point for O2. Histidine 87 is a binding site for heme b. Phosphoserine is present on serine 102. Threonine 108 carries the post-translational modification Phosphothreonine. 2 positions are modified to phosphoserine: serine 124 and serine 131. Phosphothreonine occurs at positions 134 and 137. Residue serine 138 is modified to Phosphoserine.

This sequence belongs to the globin family. Heterotetramer of two alpha chains and two beta chains. As to expression, red blood cells.

In terms of biological role, involved in oxygen transport from the lung to the various peripheral tissues. Hemopressin acts as an antagonist peptide of the cannabinoid receptor CNR1. Hemopressin-binding efficiently blocks cannabinoid receptor CNR1 and subsequent signaling. This is Hemoglobin subunit alpha (HBA) from Macrotus californicus (Californian leaf-nosed bat).